A 180-amino-acid polypeptide reads, in one-letter code: Chromosome-anchoring protein RacA (180 aa).

A DNA-binding region (H-T-H motif) is located at residues 5–25 (TPFIAKKLGVSPKAVVRIAQQ). Positions 89 to 151 (SHDFEQLTAQ…LEATLKKEEP (63 aa)) form a coiled coil.

Belongs to the RacA family.

It localises to the cytoplasm. Required for the formation of axial filaments and for anchoring the origin regions at the cell poles in sporulating cells, thus ensuring proper chromosome segregation in the prespore. Binds in a dispersed manner throughout the chromosome but preferentially to sites clustered in the origin portion of the chromosome, causing condensation of the chromosome and its remodeling into an elongated, anchored structure. The polypeptide is Chromosome-anchoring protein RacA (Bacillus cereus (strain ATCC 10987 / NRS 248)).